Reading from the N-terminus, the 339-residue chain is Anthranilate phosphoribosyltransferase (339 aa).

5-phospho-alpha-D-ribose 1-diphosphate-binding positions include Gly-81, Gly-84–Asp-85, Ser-89, Asn-91–Ser-94, Lys-109–Ser-117, and Ala-121. Position 81 (Gly-81) interacts with anthranilate. Ser-93 lines the Mg(2+) pocket. Position 112 (Asn-112) interacts with anthranilate. Arg-167 contributes to the anthranilate binding site. Mg(2+) is bound by residues Asp-225 and Glu-226.

Belongs to the anthranilate phosphoribosyltransferase family. Homodimer. Mg(2+) serves as cofactor.

The enzyme catalyses N-(5-phospho-beta-D-ribosyl)anthranilate + diphosphate = 5-phospho-alpha-D-ribose 1-diphosphate + anthranilate. The protein operates within amino-acid biosynthesis; L-tryptophan biosynthesis; L-tryptophan from chorismate: step 2/5. Its function is as follows. Catalyzes the transfer of the phosphoribosyl group of 5-phosphorylribose-1-pyrophosphate (PRPP) to anthranilate to yield N-(5'-phosphoribosyl)-anthranilate (PRA). This is Anthranilate phosphoribosyltransferase from Brucella ovis (strain ATCC 25840 / 63/290 / NCTC 10512).